A 230-amino-acid chain; its full sequence is Movement and silencing protein TGBp1 (230 aa).

Residues 1–114 (MDSIINALTS…GLALRPHFIK (114 aa)) form the (+)RNA virus helicase ATP-binding domain. Residues 115-230 (SVSHRLCPAT…VRSPPPHPSH (116 aa)) enclose the (+)RNA virus helicase C-terminal domain.

The protein belongs to the Tymovirales TGBp1 protein family. As to quaternary structure, homodimer and homooligomer. Interacts with capsid protein. Interacts with host AGO1; this interaction targets the host protein for degradation, thereby suppressing the antiviral RNA silencing.

The protein resides in the host cytoplasm. Functionally, transports viral genome to neighboring plant cells directly through plasmosdesmata, without any budding. The movement protein allows efficient cell to cell propagation, by bypassing the host cell wall barrier. Increases plasmodesma size exclusion limit. Acts as a suppressor of RNA-mediated gene silencing, also known as post-transcriptional gene silencing (PTGS), a mechanism of plant viral defense that limits the accumulation of viral RNAs. The polypeptide is Movement and silencing protein TGBp1 (Plantago asiatica (P1AMV)).